The following is a 213-amino-acid chain: Large ribosomal subunit protein uL1 (213 aa).

The protein belongs to the universal ribosomal protein uL1 family. In terms of assembly, part of the 50S ribosomal subunit.

Its function is as follows. Binds directly to 23S rRNA. Probably involved in E site tRNA release. Protein L1 is also a translational repressor protein, it controls the translation of its operon by binding to its mRNA. The protein is Large ribosomal subunit protein uL1 of Methanocella arvoryzae (strain DSM 22066 / NBRC 105507 / MRE50).